A 540-amino-acid chain; its full sequence is Phosphoenolpyruvate carboxykinase (ATP) (540 aa).

Substrate is bound at residue Arg-65. Lys-87 is modified (N6-acetyllysine). Residues Tyr-207 and Lys-213 each contribute to the substrate site. Residues Lys-213, His-232, and 248–256 contribute to the ATP site; that span reads GLSGTGKTT. Mn(2+) contacts are provided by Lys-213 and His-232. Asp-269 lines the Mn(2+) pocket. ATP-binding positions include Glu-297, Arg-333, 449–450, and Thr-455; that span reads RI. Arg-333 is a substrate binding site. N6-acetyllysine is present on Lys-523.

Belongs to the phosphoenolpyruvate carboxykinase (ATP) family. Monomer. Mn(2+) is required as a cofactor.

Its subcellular location is the cytoplasm. It catalyses the reaction oxaloacetate + ATP = phosphoenolpyruvate + ADP + CO2. Its pathway is carbohydrate biosynthesis; gluconeogenesis. Functionally, involved in the gluconeogenesis. Catalyzes the conversion of oxaloacetate (OAA) to phosphoenolpyruvate (PEP) through direct phosphoryl transfer between the nucleoside triphosphate and OAA. This is Phosphoenolpyruvate carboxykinase (ATP) from Escherichia coli O45:K1 (strain S88 / ExPEC).